A 391-amino-acid polypeptide reads, in one-letter code: B2 bradykinin receptor (391 aa).

Topologically, residues 1-60 are extracellular; that stretch reads MFSPWKISMFLSVREDSVPTTASFSADMLNVTLQGPTLNGTFAQSKCPQVEWLGWLNTIQ. N-linked (GlcNAc...) asparagine glycans are attached at residues N30 and N39. Residues 61 to 84 form a helical membrane-spanning segment; sequence PPFLWVLFVLATLENIFVLSVFCL. The Cytoplasmic portion of the chain corresponds to 85–93; sequence HKSSCTVAE. A helical transmembrane segment spans residues 94–118; sequence IYLGNLAAADLILACGLPFWAITIS. Residues 119 to 131 are Extracellular-facing; the sequence is NNFDWLFGETLCR. A disulfide bond links C130 and C211. The helical transmembrane segment at 132-153 threads the bilayer; the sequence is VVNAIISMNLYSSICFLMLVSI. Residues 154–175 lie on the Cytoplasmic side of the membrane; it reads DRYLALVKTMSMGRMRGVRWAK. Residue Y156 is modified to Phosphotyrosine. A helical transmembrane segment spans residues 176–198; that stretch reads LYSLVIWGCTLLLSSPMLVFRTM. Residues 199–221 lie on the Extracellular side of the membrane; it reads KEYSDEGHNVTACVISYPSLIWE. A glycan (N-linked (GlcNAc...) asparagine) is linked at N207. Residues 222–248 traverse the membrane as a helical segment; it reads VFTNMLLNVVGFLLPLSVITFCTMQIM. Topologically, residues 249-267 are cytoplasmic; the sequence is QVLRNNEMQKFKEIQTERR. The helical transmembrane segment at 268 to 292 threads the bilayer; it reads ATVLVLVVLLLFIICWLPFQISTFL. Residues 293-311 are Extracellular-facing; that stretch reads DTLHRLGILSSCQDERIID. A helical membrane pass occupies residues 312–335; that stretch reads VITQIASFMAYSNSCLNPLVYVIV. Residues 336–391 are Cytoplasmic-facing; sequence GKRFRKKSWEVYQGVCQKGGCRSEPIQMENSMGTLRTSISVERQIHKLQDWAGSRQ. The residue at position 347 (Y347) is a Phosphotyrosine. The S-palmitoyl cysteine moiety is linked to residue C351. Position 366 is a phosphoserine (S366). Position 369 is a phosphothreonine (T369). Phosphoserine; by GRK6 is present on residues S373 and S375.

It belongs to the G-protein coupled receptor 1 family. Bradykinin receptor subfamily. BDKRB2 sub-subfamily. Forms a complex with PECAM1 and GNAQ. Interacts with PECAM1. As to expression, ubiquitous. Widespread in normal smooth muscle tissue and neurons.

It localises to the cell membrane. Functionally, receptor for bradykinin. It is associated with G proteins that activate a phosphatidylinositol-calcium second messenger system. In Homo sapiens (Human), this protein is B2 bradykinin receptor (BDKRB2).